Here is a 196-residue protein sequence, read N- to C-terminus: Vacuolar iron transporter homolog 2 (196 aa).

Topologically, residues 1 to 31 (MDQSGSNTNMDIEKESTTFDYSKRSQWLRAA) are cytoplasmic. The helical transmembrane segment at 32 to 52 (VLGANDGLVSTASLMMGVGAV) threads the bilayer. The Vacuolar portion of the chain corresponds to 53 to 59 (KHDVKAM). Residues 60–80 (ILSGFAGMVAGACSMAIGEFV) traverse the membrane as a helical segment. The Cytoplasmic segment spans residues 81-112 (SVYSQYDIEVAQMERDSVEIEKEKLPSPMQAA). A helical membrane pass occupies residues 113 to 133 (AASALAFSAGAIVPLLAAAFV). At 134–139 (KEYKMR) the chain is on the vacuolar side. Residues 140–160 (IISVVVAVTVALMVFGWLGAA) traverse the membrane as a helical segment. At 161–172 (LGKAPAVRSSAR) the chain is on the cytoplasmic side. The chain crosses the membrane as a helical span at residues 173 to 193 (VLFGGWLAMAVTFGLTKLIGL). Residues 194–196 (YGL) lie on the Vacuolar side of the membrane.

The protein belongs to the CCC1 family. Expressed in roots, leaves and inflorescences.

It localises to the vacuole membrane. It catalyses the reaction Fe(2+)(in) = Fe(2+)(out). Functionally, vacuolar iron transporter involved in the transfer of iron ions from the cytosol to the vacuole for intracellular iron storage. Involved in regulation of cellular iron homeostasis. Vacuolar iron storage is required for seed embryo and seedling development. This chain is Vacuolar iron transporter homolog 2, found in Arabidopsis thaliana (Mouse-ear cress).